The chain runs to 303 residues: Protein REVEILLE 5 (303 aa).

Positions Thr54 to Gln108 constitute an HTH myb-type domain. The H-T-H motif DNA-binding region spans Trp81–Phe104. Residues Lys109–Pro130 are disordered.

The protein localises to the nucleus. Functionally, probable transcription factor. The protein is Protein REVEILLE 5 (RVE5) of Arabidopsis thaliana (Mouse-ear cress).